The chain runs to 311 residues: Olfactory receptor 8B8 (311 aa).

Residues 1-25 lie on the Extracellular side of the membrane; the sequence is MAAENSSFVTQFILAGLTDQPGVQI. Asn-5 carries an N-linked (GlcNAc...) asparagine glycan. A helical transmembrane segment spans residues 26 to 46; the sequence is PLFFLFLGFYVVTVVGNLGLI. At 47-54 the chain is on the cytoplasmic side; it reads TLIRLNSH. The helical transmembrane segment at 55 to 75 threads the bilayer; it reads LHTPMYFFLYNLSFIDFCYSS. Topologically, residues 76 to 99 are extracellular; the sequence is VITPKMLMSFVLKKNSISYAGCMT. Cys-97 and Cys-189 form a disulfide bridge. A helical membrane pass occupies residues 100–120; that stretch reads QLFFFLFFVVSESFILSAMAY. Residues 121 to 139 lie on the Cytoplasmic side of the membrane; it reads DRYVAICNPLLYMVTMSPQ. Residues 140-160 form a helical membrane-spanning segment; it reads VCFLLLLGVYGMGFAGAMAHT. The Extracellular portion of the chain corresponds to 161–197; the sequence is ACMMGVTFCANNLVNHYMCDILPLLECACTSTYVNEL. A helical membrane pass occupies residues 198–217; it reads VVFVVVGIDIGVPTVTIFIS. Residues 218 to 237 are Cytoplasmic-facing; sequence YALILSSIFHIDSTEGRSKA. A helical transmembrane segment spans residues 238–258; sequence FSTCSSHIIAVSLFFGSGAFM. The Extracellular portion of the chain corresponds to 259 to 271; the sequence is YLKPFSLLAMNQG. The helical transmembrane segment at 272–292 threads the bilayer; it reads KVSSLFYTTVVPMLNPLIYSL. Residues 293–311 lie on the Cytoplasmic side of the membrane; it reads RNKDVKVALKKILNKNAFS.

This sequence belongs to the G-protein coupled receptor 1 family. As to expression, expressed in the tongue and testis.

It is found in the cell membrane. Its function is as follows. Odorant receptor (Potential). May be involved in taste perception. The polypeptide is Olfactory receptor 8B8 (Homo sapiens (Human)).